The chain runs to 1180 residues: Polyamine-transporting ATPase 13A2 (1180 aa).

The Cytoplasmic segment spans residues 1 to 44 (MSADSSPLVGSTPTGYGTLTIGTSIDPLSSSVSSVRLSGYCGSP). Residues 45–65 (WRVIGYHVVVWMMAGIPLLLF) lie within the membrane without spanning it. The Cytoplasmic portion of the chain corresponds to 66 to 235 (RWKPLWGVRL…KSYPQLLVDE (170 aa)). Position 151 is a phosphoserine (Ser-151). Residues 236-253 (ALNPYYGFQAFSIALWLA) form a helical membrane-spanning segment. The Lumenal portion of the chain corresponds to 254–256 (DHY). Residues 257–276 (YWYALCIFLISSISICLSLY) form a helical membrane-spanning segment. Topologically, residues 277–427 (KTRKQSQTLR…NFKFYKHSMK (151 aa)) are cytoplasmic. Residues 428-448 (FVAALSVLALLGTIYSIFILY) form a helical membrane-spanning segment. Residues 449-463 (RNRVPLNEIVIRALD) are Lumenal-facing. A helical transmembrane segment spans residues 464-484 (LVTVVVPPALPAAMTVCTLYA). Residues 485–930 (QSRLRRQGIF…REGRCSLDTS (446 aa)) lie on the Cytoplasmic side of the membrane. Asp-513 functions as the 4-aspartylphosphate intermediate in the catalytic mechanism. The Mg(2+) site is built by Asp-878 and Asp-882. The chain crosses the membrane as a helical span at residues 931–951 (FSVFKYMALYSLTQFISVLIL). Topologically, residues 952–957 (YTINTN) are lumenal. A helical transmembrane segment spans residues 958-978 (LGDLQFLAIDLVITTTVAVLM). Over 979–994 (SRTGPALVLGRVRPPG) the chain is Cytoplasmic. The helical transmembrane segment at 995–1015 (ALLSVPVLSSLLLQMVLVTGV) threads the bilayer. The Lumenal segment spans residues 1016–1048 (QLGGYFLTLAQPWFVPLNRTVAAPDNLPNYENT). Asn-1033 carries an N-linked (GlcNAc...) asparagine glycan. Residues 1049 to 1069 (VVFSLSSFQYLILAAAVSKGA) form a helical membrane-spanning segment. At 1070-1080 (PFRRPLYTNVP) the chain is on the cytoplasmic side. A helical membrane pass occupies residues 1081 to 1101 (FLVALALLSSVLVGLVLVPGL). At 1102–1117 (LQGPLALRNITDTGFK) the chain is on the lumenal side. N-linked (GlcNAc...) asparagine glycosylation occurs at Asn-1110. Residues 1118–1138 (LLLLGLVTLNFVGAFMLESVL) form a helical membrane-spanning segment. At 1139–1180 (DQCLPACLRRLRPKRASKKRFKQLERELAEQPWPPLPAGPLR) the chain is on the cytoplasmic side.

This sequence belongs to the cation transport ATPase (P-type) (TC 3.A.3) family. Type V subfamily. In terms of assembly, interacts with MYCBP2; the interaction inhibits the ubiquitination of TSC2 by MYCBP2. Interacts with HDAC6; the interaction results in recruitment of HDAC6 to lysosomes to promote CTTN deacetylation. Autophosphorylated. Accumulates in an inactive autophosphorylated state and autophosphorylation is stimulated by phosphatidic acid and phosphatidylinositol 3,5-bisphosphate but not by Mn(2+) or Zn(2+). The presence of spermine results in a dose-dependent reduction in autophosphorylation. As to expression, expressed in brain; protein levels are markedly increased in brain from subjects with Parkinson disease and subjects with dementia with Lewy bodies. Detected in pyramidal neurons located throughout the cingulate cortex (at protein level). In the substantia nigra, it is found in neuromelanin-positive dopaminergic neurons (at protein level).

It is found in the lysosome membrane. The protein resides in the late endosome membrane. Its subcellular location is the endosome. It localises to the multivesicular body membrane. The protein localises to the cytoplasmic vesicle. It is found in the autophagosome membrane. It catalyses the reaction spermidine(out) + ATP + H2O = spermidine(in) + ADP + phosphate + H(+). The catalysed reaction is spermine(out) + ATP + H2O = spermine(in) + ADP + phosphate + H(+). With respect to regulation, accumulates in an inactive autophosphorylated state. The presence of spermine results in a dose-dependent reduction in autophosphorylation. Its function is as follows. ATPase which acts as a lysosomal polyamine exporter with high affinity for spermine. Also stimulates cellular uptake of polyamines and protects against polyamine toxicity. Plays a role in intracellular cation homeostasis and the maintenance of neuronal integrity. Contributes to cellular zinc homeostasis. Confers cellular protection against Mn(2+) and Zn(2+) toxicity and mitochondrial stress. Required for proper lysosomal and mitochondrial maintenance. Regulates the autophagy-lysosome pathway through the control of SYT11 expression at both transcriptional and post-translational levels. Facilitates recruitment of deacetylase HDAC6 to lysosomes to deacetylate CTTN, leading to actin polymerization, promotion of autophagosome-lysosome fusion and completion of autophagy. Promotes secretion of exosomes as well as secretion of SCNA via exosomes. Plays a role in lipid homeostasis. In Homo sapiens (Human), this protein is Polyamine-transporting ATPase 13A2.